Here is a 121-residue protein sequence, read N- to C-terminus: Non-specific lipid-transfer protein 9 (121 aa).

The first 27 residues, M1–S27, serve as a signal peptide directing secretion. Disulfide bonds link C31–C80, C41–C57, C58–C102, and C78–C116.

The protein belongs to the plant LTP family.

Its function is as follows. Plant non-specific lipid-transfer proteins transfer phospholipids as well as galactolipids across membranes. May play a role in wax or cutin deposition in the cell walls of expanding epidermal cells and certain secretory tissues. In Arabidopsis thaliana (Mouse-ear cress), this protein is Non-specific lipid-transfer protein 9 (LTP9).